A 377-amino-acid polypeptide reads, in one-letter code: Glutamate 5-kinase (377 aa).

Residue Lys-18 coordinates ATP. Substrate contacts are provided by Ser-59, Asp-146, and Asn-158. Residues 178-179 and 222-228 each bind ATP; these read SD and TGGMATK. Residues 286-363 form the PUA domain; the sequence is QGWVTVDAGA…DAIEAELGFT (78 aa).

The protein belongs to the glutamate 5-kinase family.

It is found in the cytoplasm. It carries out the reaction L-glutamate + ATP = L-glutamyl 5-phosphate + ADP. The protein operates within amino-acid biosynthesis; L-proline biosynthesis; L-glutamate 5-semialdehyde from L-glutamate: step 1/2. Catalyzes the transfer of a phosphate group to glutamate to form L-glutamate 5-phosphate. The polypeptide is Glutamate 5-kinase (Caulobacter vibrioides (strain ATCC 19089 / CIP 103742 / CB 15) (Caulobacter crescentus)).